The following is a 228-amino-acid chain: uncharacterized protein (228 aa).

Residues 194 to 228 (SRRADEHPAPSTEPHAAAVAPEPDFMAEPIPALEE) form a disordered region.

This is an uncharacterized protein from Treponema pallidum (strain Nichols).